A 912-amino-acid polypeptide reads, in one-letter code: Vomeronasal type-2 receptor 1 (912 aa).

Residues 1–21 form the signal peptide; that stretch reads MASRQISLALGFLAFLWAVLG. Residues 22 to 623 are Extracellular-facing; it reads AQNKTEEVQC…LAYGEALGFT (602 aa). N-linked (GlcNAc...) asparagine glycans are attached at residues Asn-24, Asn-38, Asn-299, and Asn-386. Residues 624-644 traverse the membrane as a helical segment; it reads LVILSIFGALVVLAVTVVYVI. At 645–657 the chain is on the cytoplasmic side; the sequence is HRHTPLVKANDRE. The chain crosses the membrane as a helical span at residues 658-678; it reads LSFLIQMSLVITVLSSLLFIG. The Extracellular segment spans residues 679-691; sequence KPCNWSCMARQIT. Residues 692 to 712 form a helical membrane-spanning segment; it reads LALGFCLCLSSILGKTISLFF. Residues 713–732 lie on the Cytoplasmic side of the membrane; sequence AYRISVSKTRLISMHPIFRK. A helical membrane pass occupies residues 733–753; it reads LIVLVCVVGEIGVCAAYLVLE. Residues 754 to 778 lie on the Extracellular side of the membrane; it reads PPRMFKNIEIQNVKIIFECNEGSVE. The chain crosses the membrane as a helical span at residues 779–799; it reads FLCSIFGFDVLRALLCFLTTF. Residues 800-812 lie on the Cytoplasmic side of the membrane; it reads VARQLPDNYYEGK. A helical transmembrane segment spans residues 813-833; the sequence is CITFGMLVFFIVWISFVPAYL. The Extracellular segment spans residues 834–840; it reads STKGKFK. The chain crosses the membrane as a helical span at residues 841–861; the sequence is VAVEIFAILASSYGLLGCLFL. The Cytoplasmic segment spans residues 862–912; sequence PKCFIILLRPKRNTDETVGGRVPTVDRSIQLTSASVSSELNSTTVSTVLDE.

Belongs to the G-protein coupled receptor 3 family. In terms of tissue distribution, expressed at the sensory surface of the vomeronasal organ.

Its subcellular location is the cell membrane. Its function is as follows. Putative pheromone receptor. This chain is Vomeronasal type-2 receptor 1 (Vmn2r1), found in Mus musculus (Mouse).